The sequence spans 1059 residues: Pleckstrin homology domain-containing family M member 1 (1059 aa).

Positions 40 to 182 constitute an RUN domain; sequence TSEDGDANTM…LSFELSYKSA (143 aa). The residue at position 218 (serine 218) is a Phosphoserine. Disordered stretches follow at residues 218–244, 272–334, and 354–411; these read SLDS…RRDR, LQEN…TPMF, and SEEP…DQGS. Composition is skewed to polar residues over residues 313–334 and 392–401; these read SKAQ…TPMF and GSTSDQQPSS. Residues serine 430, serine 433, and serine 488 each carry the phosphoserine modification. Residues 536-627 form the PH 1 domain; that stretch reads GLMKLGTVAR…WLDRVREALQ (92 aa). Residues 634-640 carry the LIR motif; sequence EEEWVNI. Residues 657–1059 form an interaction with RAB7A region; that stretch reads LPPYSALLPE…RKYQEQNTVS (403 aa). The PH 2 domain occupies 686–780; that stretch reads DAIKESLLYL…WRDLVRKVLA (95 aa). A Phorbol-ester/DAG-type zinc finger spans residues 989 to 1043; sequence QHVYHCDLCTQRGFICQICHHQDIIFPFEFDTTVRCAECRTVFHQSCQAVVRKGC.

Interacts (via N- and C-terminus) with RAB7A (GTP-bound form). Simultaneously interacts with RAB7A and ARL8B; bringing about clustering and fusion of late endosomes and lysosomes. Interacts (via RUN domain) with ARL8B (GTP-bound form); the interaction is required for PLEKHM1 localization to lysosomes and for ARL8B function in delivery and degradation of endocytic and autophagic cargo in lysosomes. PLEKHM1 and PLEKHM2 compete for interaction with ARL8B. Interacts with ARL8A; the interaction is weaker than with ARL8B. Interacts with VPS41, VPS11, VPS18, VPS33A and VPS39; indicative for an association with the HOPS complex; the interactions with, at least, VPS41, VPS11, VPS18 and VPS33A require ARL8B. Interacts with GABARAP, GABARAPL, GABARAPL2, MAP1LC3A, MAP1LC3B and MAP1LC3C. Interacts with PAFAH1B. Interacts (via N- and C-terminus) with NDEL1. Interacts (via C-terminus) with MAP3K7. Interacts (via N- and C-terminus) with FAM98A. Interacts (via C-terminus) with DEF8; this interaction is weak but increased in a RAB7A-dependent manner. May interact with sialyl-lex-positive protein. As to expression, expressed in testis, skeletal muscle, lung, liver, spleen, brain, heart, kidney and bone. Weakly expressed in monocytes (at protein level).

It localises to the autolysosome membrane. The protein resides in the endosome membrane. It is found in the late endosome membrane. Its subcellular location is the lysosome membrane. In terms of biological role, acts as a multivalent adapter protein that regulates Rab7-dependent and HOPS complex-dependent fusion events in the endolysosomal system and couples autophagic and the endocytic trafficking pathways. Acts as a dual effector of RAB7A and ARL8B that simultaneously binds these GTPases, bringing about clustering and fusion of late endosomes and lysosomes. Required for late stages of endolysosomal maturation, facilitating both endocytosis-mediated degradation of growth factor receptors and autophagosome clearance. Interaction with Arl8b is a crucial factor in the terminal maturation of autophagosomes and to mediate autophagosome-lysosome fusion. Positively regulates lysosome peripheral distribution and ruffled border formation in osteoclasts. May be involved in negative regulation of endocytic transport from early endosome to late endosome/lysosome implicating its association with Rab7. May have a role in sialyl-lex-mediated transduction of apoptotic signals. Involved in bone resorption. This is Pleckstrin homology domain-containing family M member 1 from Rattus norvegicus (Rat).